Reading from the N-terminus, the 275-residue chain is Undecaprenyl-diphosphatase (275 aa).

Transmembrane regions (helical) follow at residues 2–22 (LDIF…FLPI), 43–63 (FINM…IVIY), 83–103 (WQIW…GLPL), 111–131 (MTSW…FIVL), 161–181 (VLSM…AMLI), 186–206 (YVAT…ASLL), 225–245 (ILLV…KFLL), and 255–275 (PFGW…LVFA).

This sequence belongs to the UppP family.

It localises to the cell membrane. The catalysed reaction is di-trans,octa-cis-undecaprenyl diphosphate + H2O = di-trans,octa-cis-undecaprenyl phosphate + phosphate + H(+). Its function is as follows. Catalyzes the dephosphorylation of undecaprenyl diphosphate (UPP). Confers resistance to bacitracin. This Lactobacillus delbrueckii subsp. bulgaricus (strain ATCC 11842 / DSM 20081 / BCRC 10696 / JCM 1002 / NBRC 13953 / NCIMB 11778 / NCTC 12712 / WDCM 00102 / Lb 14) protein is Undecaprenyl-diphosphatase.